The primary structure comprises 1322 residues: Protein fantom (1322 aa).

A signal peptide spans 1-22 (MVSARYPIEKWSRPQLEDHFHN). Residues 15–89 (QLEDHFHNVV…MKLKAAKQQL (75 aa)) adopt a coiled-coil conformation. Residues 108-119 (RSTFRQPPSTFR) are compositionally biased toward polar residues. 3 disordered regions span residues 108 to 151 (RSTF…GEKL), 189 to 275 (KSSV…PDQT), and 392 to 418 (RIEE…SQSE). Residues 195–217 (SSPPTRLSTSSSSKSSSSNNNND) are compositionally biased toward low complexity. Acidic residues predominate over residues 224–234 (ELEEMSEMSDD). Residues 274–362 (QTEKVLLDKL…EDQKKFEAMR (89 aa)) adopt a coiled-coil conformation. Positions 456-538 (ASENSLARWQ…FMLEEQIRTI (83 aa)) form a coiled coil. 2 disordered regions span residues 891–1094 (AELH…KPRN) and 1121–1149 (TDPL…PVPL). Residues 918 to 927 (TDSSDTSFSH) are compositionally biased toward low complexity. Acidic residues predominate over residues 956-975 (SDGEEEADRIVFDDDDDEIE). Positions 984 to 996 (RDPEPLEVPERQV) are enriched in basic and acidic residues. Polar residues predominate over residues 1015–1029 (NGTNESKESTPVTQR). The span at 1042-1067 (PELEPESGPEPEPVVESEPNEVAETE) shows a compositional bias: acidic residues. Residues 1068–1080 (EDRKRELKTEELK) show a composition bias toward basic and acidic residues. Low complexity predominate over residues 1127-1139 (SVPPSESSSTSSP).

Belongs to the RPGRIP1 family. In terms of tissue distribution, expressed at the transition zone at the base of cilia. Expressed in ciliated sensory neurons, including the amphid neurons in the head.

It is found in the cell projection. The protein resides in the cilium. Thought to have an important role in cilia formation and cilia-mediated chemosensation. Involved in the docking of other MKS/MKSR proteins localized to the transition zone of the cilia. This chain is Protein fantom (mks-5), found in Caenorhabditis elegans.